Consider the following 342-residue polypeptide: Ferredoxin--NADP reductase (342 aa).

Positions 17, 36, 44, 49, 89, 124, 289, and 330 each coordinate FAD.

The protein belongs to the ferredoxin--NADP reductase type 2 family. As to quaternary structure, homodimer. The cofactor is FAD.

The enzyme catalyses 2 reduced [2Fe-2S]-[ferredoxin] + NADP(+) + H(+) = 2 oxidized [2Fe-2S]-[ferredoxin] + NADPH. The polypeptide is Ferredoxin--NADP reductase (Nitrobacter hamburgensis (strain DSM 10229 / NCIMB 13809 / X14)).